The primary structure comprises 97 residues: Citrate lyase acyl carrier protein (97 aa).

Residue S14 is modified to O-(phosphoribosyl dephospho-coenzyme A)serine.

Belongs to the CitD family. As to quaternary structure, oligomer with a subunit composition of (alpha,beta,gamma)6.

The protein localises to the cytoplasm. In terms of biological role, covalent carrier of the coenzyme of citrate lyase. This chain is Citrate lyase acyl carrier protein, found in Cronobacter sakazakii (strain ATCC BAA-894) (Enterobacter sakazakii).